The sequence spans 368 residues: Putative flavoprotein monooxygenase (368 aa).

FAD contacts are provided by residues Ala-14, Glu-34, Ser-41, 52-53 (IT), Val-110, Ala-307, and Ile-319.

It depends on FAD as a cofactor.

Its function is as follows. FAD-binding protein that may have monooxygenase activity using NADPH and/or NADH as an electron donor. This chain is Putative flavoprotein monooxygenase, found in Staphylococcus aureus (strain Mu50 / ATCC 700699).